Consider the following 409-residue polypeptide: Dihydrolipoyllysine-residue succinyltransferase component of 2-oxoglutarate dehydrogenase complex (409 aa).

The Lipoyl-binding domain occupies 2–77 (AIEIKAPTFP…LSNELLGKLN (76 aa)). At Lys43 the chain carries N6-lipoyllysine. Residues 112-149 (ILSPAARKLAEEAGIDPNSIAGTGKGGRVTKEDVVAAV) enclose the Peripheral subunit-binding (PSBD) domain. Active-site residues include His380 and Asp384.

This sequence belongs to the 2-oxoacid dehydrogenase family. Forms a 24-polypeptide structural core with octahedral symmetry. Part of the 2-oxoglutarate dehydrogenase (OGDH) complex composed of E1 (2-oxoglutarate dehydrogenase), E2 (dihydrolipoamide succinyltransferase) and E3 (dihydrolipoamide dehydrogenase); the complex contains multiple copies of the three enzymatic components (E1, E2 and E3). (R)-lipoate serves as cofactor.

It carries out the reaction N(6)-[(R)-dihydrolipoyl]-L-lysyl-[protein] + succinyl-CoA = N(6)-[(R)-S(8)-succinyldihydrolipoyl]-L-lysyl-[protein] + CoA. It functions in the pathway amino-acid degradation; L-lysine degradation via saccharopine pathway; glutaryl-CoA from L-lysine: step 6/6. Functionally, E2 component of the 2-oxoglutarate dehydrogenase (OGDH) complex which catalyzes the second step in the conversion of 2-oxoglutarate to succinyl-CoA and CO(2). This Pseudomonas aeruginosa (strain ATCC 15692 / DSM 22644 / CIP 104116 / JCM 14847 / LMG 12228 / 1C / PRS 101 / PAO1) protein is Dihydrolipoyllysine-residue succinyltransferase component of 2-oxoglutarate dehydrogenase complex (sucB).